The primary structure comprises 192 residues: Adenylate kinase (192 aa).

Position 12–17 (12–17 (GSGKTT)) interacts with ATP. Residues 34 to 63 (STGDLLRAQVASGSELGKTIDSFISKGNLV) form an NMP region. Residues T35, R40, 61-63 (NLV), 88-91 (GYPR), and Q95 each bind AMP. The segment at 130–136 (GRNRGAD) is LID. ATP is bound at residue R131. AMP contacts are provided by R133 and R145. R173 is a binding site for ATP.

The protein belongs to the adenylate kinase family. In terms of assembly, monomer.

Its subcellular location is the cytoplasm. It catalyses the reaction AMP + ATP = 2 ADP. Its pathway is purine metabolism; AMP biosynthesis via salvage pathway; AMP from ADP: step 1/1. Catalyzes the reversible transfer of the terminal phosphate group between ATP and AMP. Plays an important role in cellular energy homeostasis and in adenine nucleotide metabolism. In Campylobacter jejuni subsp. doylei (strain ATCC BAA-1458 / RM4099 / 269.97), this protein is Adenylate kinase.